Here is a 491-residue protein sequence, read N- to C-terminus: Glutamine synthetase (491 aa).

Positions 23 to 111 (NNVRQVLCAF…MFGNVYEAWG (89 aa)) constitute a GS beta-grasp domain. Residues 119–491 (PRGYVAKRYE…PWEFMKYFDI (373 aa)) form the GS catalytic domain. 2 residues coordinate Mg(2+): glutamate 143 and glutamate 145. Position 225 (glutamate 225) interacts with ATP. Positions 230 and 238 each coordinate Mg(2+). L-glutamate contacts are provided by residues 282–283 (NA) and alanine 283. Histidine 287 lines the Mg(2+) pocket. Residues 289–291 (HQS) and serine 291 each bind ATP. L-glutamate contacts are provided by arginine 344, glutamate 350, and arginine 362. Residues arginine 362 and arginine 367 each coordinate ATP. Position 381 (glutamate 381) interacts with Mg(2+). Arginine 383 contributes to the L-glutamate binding site.

Belongs to the glutamine synthetase family. Oligomer of 12 subunits arranged in the form of two hexagons. It depends on Mg(2+) as a cofactor.

It localises to the cytoplasm. The enzyme catalyses L-glutamate + NH4(+) + ATP = L-glutamine + ADP + phosphate + H(+). In terms of biological role, probably involved in nitrogen metabolism via ammonium assimilation. Catalyzes the ATP-dependent biosynthesis of glutamine from glutamate and ammonia. Beta-glutamate is a much poorer substrate than alpha-glutamate. The protein is Glutamine synthetase of Archaeoglobus fulgidus (strain ATCC 49558 / DSM 4304 / JCM 9628 / NBRC 100126 / VC-16).